Reading from the N-terminus, the 148-residue chain is Putative nickel-responsive regulator (148 aa).

Residues histidine 88, histidine 99, histidine 101, and cysteine 107 each contribute to the Ni(2+) site.

Belongs to the transcriptional regulatory CopG/NikR family. Ni(2+) serves as cofactor.

In terms of biological role, transcriptional regulator. In Helicobacter acinonychis (strain Sheeba), this protein is Putative nickel-responsive regulator.